A 238-amino-acid polypeptide reads, in one-letter code: MGDNLKVIEADSVSYDYPDGSAGVREVSLEIFEGDRVGLIGANGSGKSTLILLLAGLLRPTKGKIRIFGREIDKKNVEEIRRKIGVVFQNPDDFLFNPTVRDELLYVPRQLEWSEEEMENAVKEYAEMFGITHLLNKPPFRLSGGEKKKVEIASVLIYKPEVLLLDEPTAYVDGKTKRLILKILEDFKGTLVIATHELDVAEKLADKFVLLNLEHRIEAAGGKEILKNEELLEKAGVI.

The ABC transporter domain occupies Ile-8–Ile-238. Gly-41–Ser-48 contributes to the ATP binding site.

It belongs to the ABC transporter superfamily.

The protein localises to the cell membrane. Its function is as follows. Probably part of an ABC transporter complex. Responsible for energy coupling to the transport system. The chain is Putative ABC transporter ATP-binding protein AF_1841 from Archaeoglobus fulgidus (strain ATCC 49558 / DSM 4304 / JCM 9628 / NBRC 100126 / VC-16).